An 881-amino-acid chain; its full sequence is Rho GTPase-activating protein 17 (881 aa).

The BAR domain maps to 14-246 (QTVGRAEKTE…MRAHQDKWAE (233 aa)). The Rho-GAP domain occupies 252-442 (TPLEEHLKRS…PIIQHADWFF (191 aa)). Positions 459–475 (TPSSNHSFHTGNDSDSG) are enriched in polar residues. The interval 459-482 (TPSSNHSFHTGNDSDSGTLERKRP) is disordered. Phosphoserine is present on residues serine 484 and serine 575. Positions 511–881 (GGTLNRKHIS…IDNDTESTAL (371 aa)) are disordered. Residues 592-617 (RNNSQIASGQNQPQAAAGSHQLSMGQ) are compositionally biased toward polar residues. Pro residues predominate over residues 637–650 (APAPPKPGNPPPGH). A compositionally biased stretch (low complexity) spans 653-664 (GQSSSGTSQHPP). The span at 665–678 (SLSPKPPTRSPSPP) shows a compositional bias: pro residues. Phosphothreonine is present on residues threonine 679 and threonine 682. Residues 679–698 (TQHTGQPPGQPSAPSQLSAP) show a composition bias toward low complexity. Residues serine 702 and serine 704 each carry the phosphoserine modification. Pro residues-rich tracts occupy residues 712-721 (NHPPPQPPTQ), 752-764 (HTPP…PSTP), and 806-816 (RPSVPPPPQPP). Phosphothreonine is present on residues threonine 753, threonine 757, and threonine 759. An SH3-binding motif is present at residues 753 to 766 (TPPQTPTPPSTPPL). Residue serine 762 is modified to Phosphoserine. Position 763 is a phosphothreonine (threonine 763). Polar residues predominate over residues 822–844 (GDSSLTNTAPTASKIVTDSNSRV). Residues 845–865 (SEPHRSIFPEMHSDSASKDVP) are compositionally biased toward basic and acidic residues. A compositionally biased stretch (acidic residues) spans 872 to 881 (IDNDTESTAL).

Component of a complex whose core is composed of ARHGAP17, AMOT, PALS1, PATJ and PARD3/PAR3. Interacts with NHERF1, FNBP1, TRIP10, CAPZA (CAPZA1, CAPZA2 or CAPZA3), CAPZB, CD2AP and SH3KBP1/CIN85. As to expression, ubiquitously expressed. Expressed at higher level in heart and placenta.

The protein resides in the membrane. It is found in the cytoplasm. It localises to the cell junction. Its subcellular location is the tight junction. Its function is as follows. Rho GTPase-activating protein involved in the maintenance of tight junction by regulating the activity of CDC42, thereby playing a central role in apical polarity of epithelial cells. Specifically acts as a GTPase activator for the CDC42 GTPase by converting it to an inactive GDP-bound state. The complex formed with AMOT acts by regulating the uptake of polarity proteins at tight junctions, possibly by deciding whether tight junction transmembrane proteins are recycled back to the plasma membrane or sent elsewhere. Participates in the Ca(2+)-dependent regulation of exocytosis, possibly by catalyzing GTPase activity of Rho family proteins and by inducing the reorganization of the cortical actin filaments. Acts as a GTPase activator in vitro for RAC1. In Homo sapiens (Human), this protein is Rho GTPase-activating protein 17 (ARHGAP17).